The chain runs to 237 residues: CDP-diacylglycerol--serine O-phosphatidyltransferase (237 aa).

8 consecutive transmembrane segments (helical) span residues 3–23 (INPLYLFPNLFTASSIFLGMM), 25–45 (IFYASSYQFVMACWLVVASLI), 73–93 (VIAFGVAPSLIAYFYVGYNFG), 95–115 (IGMAVSALFVIFGAIRLARFN), 124–144 (YSFIGIPIPAAAVLVVLCVLL), 150–170 (FLEGNTEKLFLSFIVLLGVLM), 184–204 (WNLKLFILVLIFLSLVFVRPL), and 207–227 (LSVFMGLYLIYGIIRWLFLMV).

This sequence belongs to the CDP-alcohol phosphatidyltransferase class-I family.

It is found in the cell membrane. It catalyses the reaction a CDP-1,2-diacyl-sn-glycerol + L-serine = a 1,2-diacyl-sn-glycero-3-phospho-L-serine + CMP + H(+). The polypeptide is CDP-diacylglycerol--serine O-phosphatidyltransferase (pssA) (Helicobacter pylori (strain ATCC 700392 / 26695) (Campylobacter pylori)).